The sequence spans 330 residues: Ornithine carbamoyltransferase (330 aa).

Carbamoyl phosphate is bound by residues 57 to 60 (STRT), glutamine 84, arginine 108, and 135 to 138 (HPTQ). Residues asparagine 168, aspartate 232, and 236 to 237 (SM) each bind L-ornithine. Residues 273 to 274 (CL) and arginine 318 contribute to the carbamoyl phosphate site.

It belongs to the aspartate/ornithine carbamoyltransferase superfamily. OTCase family.

The protein localises to the cytoplasm. It carries out the reaction carbamoyl phosphate + L-ornithine = L-citrulline + phosphate + H(+). It functions in the pathway amino-acid biosynthesis; L-arginine biosynthesis; L-arginine from L-ornithine and carbamoyl phosphate: step 1/3. In terms of biological role, reversibly catalyzes the transfer of the carbamoyl group from carbamoyl phosphate (CP) to the N(epsilon) atom of ornithine (ORN) to produce L-citrulline. This is Ornithine carbamoyltransferase from Alkaliphilus metalliredigens (strain QYMF).